We begin with the raw amino-acid sequence, 1011 residues long: METSSMLSSLNDECKSDNYIEPHYKEWYRVAIDILIEHGLEAYQEFLVQERVSDFLAEEEINYILKNVQKVAQSTAHGTDDSCDDTLSSGTYWPVESDVEAPNLDLGWPYVMPGLLGGTHIDLLFHPPRAHLLTIKETIRKMIKEARKVIALVMDIFTDVDIFKEIVEASTRGVSVYILLDESNFNHFLNMTEKQGCSVQRLRNIRVRTVKGQDYLSKTGAKFHGKMEQKFLLVDCQKVMYGSYSYMWSFEKAHLSMVQIITGQLVESFDEEFRTLYARSCVPSSFAQEESARVKHGKALWENGTYQHSVSSLASVSSQRNLFGRQDKIHKLDSSYFKNRGIYTLNEHDKYNIRSHGYKPHFVPNFNGPNAIRQFQPNQINENWKRHSYAGEQPETVPYLLLNRALNRTNNPPGNWKKPSDSLSVASSSREGYVSHHNTPAQSFANRLAQRKTTNLADRNSNVRRSFNGTDNHIRFLQQRMPTLEHTTKSFLRNWRIESYLNDHSEATPDSNGSALGDRFEGYDNPENLKANALYTHSRLRSSLVFKPTLPEQKEVNSCTTGSSNSTIIGSQGSETPKEVPDTPTNVQHLTDKPLPESIPKLPLQSEAPKMHTLQVPENHSVALNQTTNGHTESNNYIYKTLGVNKQTENLKNQQTENLLKRRSFPLFDNSKANLDPGNSKHYVYSTLTRNRVRQPEKPKEDLLKSSKSMHNVTHNLEEDEEEVTKRNSPSGTTTKSVSIAALLDVNKEESNKELASKKEVKGSPSFLKKGSQKLRSLLSLTPDKKENLSKNKAPAFYRLCSSSDTLVSEGEENQKPKKSDTKVDSSPRRKHSSSSNSQGSIHKSKEDVTVSPSQEINAPPDENKRTPSPGPVESKFLERAGDASAPRFNTEQIQYRDSREINAVVTPERRPTSSPRPTSSELLRSHSTDRRVYSRFEPFCKIESSIQPTSNMPNTSINRPEIKSATMGNSYGRSSPLLNYNTGVYRSYQPNENKFRGFMQKFGNFIHKNK.

Residues 1–283 (METSSMLSSL…RTLYARSCVP (283 aa)) are DUF1669. The interval 1–284 (METSSMLSSL…TLYARSCVPS (284 aa)) is required for interaction with RAF1 and for the function. Residues Ser334, Ser422, Ser424, Ser466, and Ser543 each carry the phosphoserine modification. The disordered stretch occupies residues 555 to 585 (EVNSCTTGSSNSTIIGSQGSETPKEVPDTPT). Residues 557–574 (NSCTTGSSNSTIIGSQGS) show a composition bias toward low complexity. Residue Ser664 is modified to Phosphoserine. Disordered stretches follow at residues 691 to 738 (NRVR…TKSV) and 750 to 769 (ESNKELASKKEVKGSPSFLK). Residues 694 to 705 (RQPEKPKEDLLK) are compositionally biased toward basic and acidic residues. Composition is skewed to polar residues over residues 706–715 (SSKSMHNVTH) and 727–738 (RNSPSGTTTKSV). Basic and acidic residues predominate over residues 750–762 (ESNKELASKKEVK). Thr782 carries the post-translational modification Phosphothreonine. A Phosphoserine modification is found at Ser802. Residues 807 to 928 (LVSEGEENQK…TSSELLRSHS (122 aa)) are disordered. Residues 813-828 (ENQKPKKSDTKVDSSP) show a composition bias toward basic and acidic residues. Phosphoserine is present on residues Ser852, Ser869, and Ser915. Residues 913 to 923 (TSSPRPTSSEL) are compositionally biased toward low complexity.

It belongs to the FAM83 family. Interacts with EGFR; positively regulates EGFR inducing its autophosphorylation in absence of stimulation by EGF. Interacts with RAF1; displaces 14-3-3 proteins from RAF1 and activates RAF1 within the RAS/MAPK signaling cascade. Interacts with AKT1, PIK3CA and PIK3R1; activates the PI3K/AKT signaling cascade. Directly interacts (via DUF1669) with casein kinase isoforms CSNK1A1, CSNK1A1L, CSNK1D and CSNK1E. Phosphorylated in vitro by CSNK1A1.

It localises to the cytoplasm. Its subcellular location is the membrane. Probable proto-oncogene that functions in the epidermal growth factor receptor/EGFR signaling pathway. Activates both the EGFR itself and downstream RAS/MAPK and PI3K/AKT/TOR signaling cascades. In Homo sapiens (Human), this protein is Protein FAM83B.